Reading from the N-terminus, the 147-residue chain is uncharacterized protein (147 aa).

Residues 50 to 138 (IVVAGNIKVK…LLAKPAEIKI (89 aa)) enclose the ABM domain.

The protein belongs to the LsrG family.

This is an uncharacterized protein from Synechocystis sp. (strain ATCC 27184 / PCC 6803 / Kazusa).